The sequence spans 172 residues: 3-hydroxydecanoyl-[acyl-carrier-protein] dehydratase (172 aa).

The active site involves histidine 71.

It belongs to the thioester dehydratase family. FabA subfamily. Homodimer.

The protein localises to the cytoplasm. It catalyses the reaction a (3R)-hydroxyacyl-[ACP] = a (2E)-enoyl-[ACP] + H2O. The catalysed reaction is (3R)-hydroxydecanoyl-[ACP] = (2E)-decenoyl-[ACP] + H2O. The enzyme catalyses (2E)-decenoyl-[ACP] = (3Z)-decenoyl-[ACP]. The protein operates within lipid metabolism; fatty acid biosynthesis. Necessary for the introduction of cis unsaturation into fatty acids. Catalyzes the dehydration of (3R)-3-hydroxydecanoyl-ACP to E-(2)-decenoyl-ACP and then its isomerization to Z-(3)-decenoyl-ACP. Can catalyze the dehydratase reaction for beta-hydroxyacyl-ACPs with saturated chain lengths up to 16:0, being most active on intermediate chain length. The sequence is that of 3-hydroxydecanoyl-[acyl-carrier-protein] dehydratase from Aliivibrio salmonicida (strain LFI1238) (Vibrio salmonicida (strain LFI1238)).